Here is a 257-residue protein sequence, read N- to C-terminus: Hydroxyacylglutathione hydrolase (257 aa).

7 residues coordinate Zn(2+): His54, His56, Asp58, His59, His113, Asp137, and His175.

The protein belongs to the metallo-beta-lactamase superfamily. Glyoxalase II family. Monomer. Zn(2+) serves as cofactor.

The enzyme catalyses an S-(2-hydroxyacyl)glutathione + H2O = a 2-hydroxy carboxylate + glutathione + H(+). It participates in secondary metabolite metabolism; methylglyoxal degradation; (R)-lactate from methylglyoxal: step 2/2. Thiolesterase that catalyzes the hydrolysis of S-D-lactoyl-glutathione to form glutathione and D-lactic acid. This Acaryochloris marina (strain MBIC 11017) protein is Hydroxyacylglutathione hydrolase.